Here is a 59-residue protein sequence, read N- to C-terminus: Sec-independent protein translocase protein TatA 1 (59 aa).

Residues 3–23 (FPLPWQLILILLVILVIFGAS) traverse the membrane as a helical segment.

It belongs to the TatA/E family. Forms a complex with TatC.

The protein resides in the cell inner membrane. Part of the twin-arginine translocation (Tat) system that transports large folded proteins containing a characteristic twin-arginine motif in their signal peptide across membranes. TatA could form the protein-conducting channel of the Tat system. This is Sec-independent protein translocase protein TatA 1 from Aquifex aeolicus (strain VF5).